Here is a 118-residue protein sequence, read N- to C-terminus: Putative pterin-4-alpha-carbinolamine dehydratase (118 aa).

It belongs to the pterin-4-alpha-carbinolamine dehydratase family.

The enzyme catalyses (4aS,6R)-4a-hydroxy-L-erythro-5,6,7,8-tetrahydrobiopterin = (6R)-L-erythro-6,7-dihydrobiopterin + H2O. The polypeptide is Putative pterin-4-alpha-carbinolamine dehydratase (phhB) (Xanthomonas axonopodis pv. citri (strain 306)).